Consider the following 266-residue polypeptide: Indole-3-glycerol phosphate synthase (266 aa).

Belongs to the TrpC family.

The enzyme catalyses 1-(2-carboxyphenylamino)-1-deoxy-D-ribulose 5-phosphate + H(+) = (1S,2R)-1-C-(indol-3-yl)glycerol 3-phosphate + CO2 + H2O. It functions in the pathway amino-acid biosynthesis; L-tryptophan biosynthesis; L-tryptophan from chorismate: step 4/5. The sequence is that of Indole-3-glycerol phosphate synthase from Variovorax paradoxus (strain S110).